A 228-amino-acid chain; its full sequence is HTH-type transcriptional repressor RspR (228 aa).

An HTH gntR-type domain is found at 11 to 78 (QPVNQQIYRI…PQRGSYVNKI (68 aa)). The segment at residues 38–57 (EKEVSVRFNVSRQPVREAFI) is a DNA-binding region (H-T-H motif).

Its function is as follows. Repressor of the rspAB operon. Acts by binding directly to the upstream region of rspA. The polypeptide is HTH-type transcriptional repressor RspR (rspR) (Escherichia coli (strain K12)).